Here is a 397-residue protein sequence, read N- to C-terminus: Riboflavin biosynthesis protein RibBA (397 aa).

Residues 1 to 199 (MFHRIEEALE…IEDLIAYRRH (199 aa)) are DHBP synthase. D-ribulose 5-phosphate is bound by residues 26-27 (RE), D31, 138-142 (RAGHT), and E162. Position 27 (E27) interacts with Mg(2+). H141 contacts Mg(2+). Residues 200 to 397 (HETFVTKEVE…VTKLGHLLNL (198 aa)) form a GTP cyclohydrolase II region. Residue 250-254 (RVHSE) coordinates GTP. The Zn(2+) site is built by C255, C266, and C268. GTP is bound by residues Q271, 293–295 (EGR), and T315. D327 (proton acceptor; for GTP cyclohydrolase activity) is an active-site residue. R329 acts as the Nucleophile; for GTP cyclohydrolase activity in catalysis. 2 residues coordinate GTP: T350 and K355.

This sequence in the N-terminal section; belongs to the DHBP synthase family. The protein in the C-terminal section; belongs to the GTP cyclohydrolase II family. Mg(2+) is required as a cofactor. Requires Mn(2+) as cofactor. Zn(2+) serves as cofactor.

The enzyme catalyses D-ribulose 5-phosphate = (2S)-2-hydroxy-3-oxobutyl phosphate + formate + H(+). It carries out the reaction GTP + 4 H2O = 2,5-diamino-6-hydroxy-4-(5-phosphoribosylamino)-pyrimidine + formate + 2 phosphate + 3 H(+). It functions in the pathway cofactor biosynthesis; riboflavin biosynthesis; 2-hydroxy-3-oxobutyl phosphate from D-ribulose 5-phosphate: step 1/1. It participates in cofactor biosynthesis; riboflavin biosynthesis; 5-amino-6-(D-ribitylamino)uracil from GTP: step 1/4. Functionally, catalyzes the conversion of D-ribulose 5-phosphate to formate and 3,4-dihydroxy-2-butanone 4-phosphate. Its function is as follows. Catalyzes the conversion of GTP to 2,5-diamino-6-ribosylamino-4(3H)-pyrimidinone 5'-phosphate (DARP), formate and pyrophosphate. The polypeptide is Riboflavin biosynthesis protein RibBA (Bacillus cytotoxicus (strain DSM 22905 / CIP 110041 / 391-98 / NVH 391-98)).